Reading from the N-terminus, the 305-residue chain is Ribonuclease BN (305 aa).

7 residues coordinate Zn(2+): His-64, His-66, Asp-68, His-69, His-141, Asp-212, and His-270. Asp-68 functions as the Proton acceptor in the catalytic mechanism.

The protein belongs to the RNase Z family. RNase BN subfamily. As to quaternary structure, homodimer. The cofactor is Zn(2+).

In terms of biological role, zinc phosphodiesterase, which has both exoribonuclease and endoribonuclease activities. This is Ribonuclease BN from Escherichia coli O139:H28 (strain E24377A / ETEC).